A 92-amino-acid chain; its full sequence is MARSSKKNPFVANHLLSKIEKLNKAEERSIIVTWSRASTIIFAMVGHTIAVHNGKEHLPIYITERMVGHKLGEFAPTLTFRGHARNDNRSRR.

This sequence belongs to the universal ribosomal protein uS19 family.

It is found in the plastid. It localises to the chloroplast. Protein S19 forms a complex with S13 that binds strongly to the 16S ribosomal RNA. In Nymphaea alba (White water-lily), this protein is Small ribosomal subunit protein uS19c.